The chain runs to 386 residues: Delta(7)-sterol 5(6)-desaturase (386 aa).

A run of 3 helical transmembrane segments spans residues Val-119–Tyr-139, Ile-172–Phe-192, and Ala-206–His-226. A Fatty acid hydroxylase domain is found at Phe-214–Asn-337. The Histidine box-1 motif lies at His-226–His-230. The Histidine box-2 signature appears at His-239–His-243. A helical transmembrane segment spans residues Pro-272–Trp-292. Residues His-314–His-318 carry the Histidine box-3 motif.

Belongs to the sterol desaturase family. Fe cation is required as a cofactor.

The protein resides in the endoplasmic reticulum membrane. It carries out the reaction a Delta(7)-sterol + 2 Fe(II)-[cytochrome b5] + O2 + 2 H(+) = a Delta(5),Delta(7)-sterol + 2 Fe(III)-[cytochrome b5] + 2 H2O. Its pathway is steroid metabolism; ergosterol biosynthesis; ergosterol from zymosterol: step 3/5. Catalyzes the introduction of a C-5 double bond in the B ring of ergosterol. May contribute to the regulation of ergosterol biosynthesis. The protein is Delta(7)-sterol 5(6)-desaturase (ERG3) of Candida dubliniensis (strain CD36 / ATCC MYA-646 / CBS 7987 / NCPF 3949 / NRRL Y-17841) (Yeast).